Here is a 420-residue protein sequence, read N- to C-terminus: Bone morphogenetic protein 2 (420 aa).

The first 23 residues, 1-23, serve as a signal peptide directing secretion; that stretch reads MVAVVRSLMVLLLAQVLLEGATG. Positions 24 to 303 are excised as a propeptide; sequence LIPEVGRRRY…DSVLHTREKR (280 aa). N-linked (GlcNAc...) asparagine glycans are attached at residues Asn-138, Asn-167, Asn-168, Asn-172, and Asn-362. 3 cysteine pairs are disulfide-bonded: Cys-320/Cys-385, Cys-349/Cys-417, and Cys-353/Cys-419.

It belongs to the TGF-beta family. Homodimer; disulfide-linked.

Its subcellular location is the secreted. In terms of biological role, induces cartilage and bone formation. The protein is Bone morphogenetic protein 2 (bmp2) of Tetraodon nigroviridis (Spotted green pufferfish).